A 123-amino-acid polypeptide reads, in one-letter code: Phosphoribosyl-AMP cyclohydrolase (123 aa).

A Mg(2+)-binding site is contributed by aspartate 81. Cysteine 82 contributes to the Zn(2+) binding site. Residues aspartate 83 and aspartate 85 each coordinate Mg(2+). Positions 98 and 105 each coordinate Zn(2+).

The protein belongs to the PRA-CH family. As to quaternary structure, homodimer. The cofactor is Mg(2+). Zn(2+) serves as cofactor.

It is found in the cytoplasm. It carries out the reaction 1-(5-phospho-beta-D-ribosyl)-5'-AMP + H2O = 1-(5-phospho-beta-D-ribosyl)-5-[(5-phospho-beta-D-ribosylamino)methylideneamino]imidazole-4-carboxamide. The protein operates within amino-acid biosynthesis; L-histidine biosynthesis; L-histidine from 5-phospho-alpha-D-ribose 1-diphosphate: step 3/9. Catalyzes the hydrolysis of the adenine ring of phosphoribosyl-AMP. The polypeptide is Phosphoribosyl-AMP cyclohydrolase (Nocardioides sp. (strain ATCC BAA-499 / JS614)).